The sequence spans 283 residues: Urease accessory protein UreD (283 aa).

It belongs to the UreD family. As to quaternary structure, ureD, UreF and UreG form a complex that acts as a GTP-hydrolysis-dependent molecular chaperone, activating the urease apoprotein by helping to assemble the nickel containing metallocenter of UreC. The UreE protein probably delivers the nickel.

The protein localises to the cytoplasm. Its function is as follows. Required for maturation of urease via the functional incorporation of the urease nickel metallocenter. This is Urease accessory protein UreD from Rhodopseudomonas palustris (strain BisB5).